The following is a 185-amino-acid chain: UPF0669 protein C6orf120 homolog (185 aa).

A signal peptide spans 1-23 (MATPWRRALLMILASQVVTLVKC). Asparagine 47 carries an N-linked (GlcNAc...) asparagine glycan.

This sequence belongs to the UPF0669 family.

The protein localises to the secreted. Functionally, may be involved in induction of apoptosis in CD4(+) T-cells, but not CD8(+) T-cells or hepatocytes. The chain is UPF0669 protein C6orf120 homolog from Mus musculus (Mouse).